Consider the following 393-residue polypeptide: NAD(P)H-quinone oxidoreductase subunit H, chloroplastic (393 aa).

It belongs to the complex I 49 kDa subunit family. In terms of assembly, NDH is composed of at least 16 different subunits, 5 of which are encoded in the nucleus.

The protein resides in the plastid. The protein localises to the chloroplast thylakoid membrane. The catalysed reaction is a plastoquinone + NADH + (n+1) H(+)(in) = a plastoquinol + NAD(+) + n H(+)(out). The enzyme catalyses a plastoquinone + NADPH + (n+1) H(+)(in) = a plastoquinol + NADP(+) + n H(+)(out). Functionally, NDH shuttles electrons from NAD(P)H:plastoquinone, via FMN and iron-sulfur (Fe-S) centers, to quinones in the photosynthetic chain and possibly in a chloroplast respiratory chain. The immediate electron acceptor for the enzyme in this species is believed to be plastoquinone. Couples the redox reaction to proton translocation, and thus conserves the redox energy in a proton gradient. This is NAD(P)H-quinone oxidoreductase subunit H, chloroplastic from Lolium perenne (Perennial ryegrass).